The chain runs to 184 residues: Photosystem I assembly protein Ycf4 (184 aa).

The next 2 membrane-spanning stretches (helical) occupy residues 22-42 (FCWA…GTSS) and 57-77 (IIFF…LFIS).

Belongs to the Ycf4 family.

It is found in the plastid. The protein localises to the chloroplast thylakoid membrane. Seems to be required for the assembly of the photosystem I complex. This is Photosystem I assembly protein Ycf4 from Lepidium virginicum (Virginia pepperweed).